We begin with the raw amino-acid sequence, 480 residues long: DNA repair protein RadA (480 aa).

Residues 10-27 (CSECRHVSAKWVGRCLEC) form a C4-type zinc finger. 95 to 102 (GDPGVGKS) is an ATP binding site. The RadA KNRFG motif signature appears at 254 to 258 (KNRFG). The interval 353–480 (DIYLSTVGGM…TGHVPLGRGT (128 aa)) is lon-protease-like. Residues 459–480 (GTTLATPPSHSGTGHVPLGRGT) are disordered. Polar residues predominate over residues 461 to 470 (TLATPPSHSG).

The protein belongs to the RecA family. RadA subfamily.

DNA-dependent ATPase involved in processing of recombination intermediates, plays a role in repairing DNA breaks. Stimulates the branch migration of RecA-mediated strand transfer reactions, allowing the 3' invading strand to extend heteroduplex DNA faster. Binds ssDNA in the presence of ADP but not other nucleotides, has ATPase activity that is stimulated by ssDNA and various branched DNA structures, but inhibited by SSB. Does not have RecA's homology-searching function. This is DNA repair protein RadA from Mycobacterium tuberculosis (strain CDC 1551 / Oshkosh).